A 299-amino-acid chain; its full sequence is Prohibitin-2 (299 aa).

Position 2 is an N-acetylalanine (alanine 2). The necessary for transcriptional repression stretch occupies residues 19–49; the sequence is MGTALKLLLGAGAVAYGVRESVFTVEGGHRA. Phosphotyrosine is present on tyrosine 128. The residue at position 147 (lysine 147) is an N6-acetyllysine. The interval 150–174 is necessary for transcriptional repression; that stretch reads ASQLITQRAQVSLLIRRELTERAKD. Serine 151 carries the post-translational modification Phosphoserine. A coiled-coil region spans residues 190–238; sequence SREYTAAVEAKQVAQQEAQRAQFLVEKAKQEQRQKIVQAEGEAEAAKML. Residues lysine 200, lysine 236, lysine 250, and lysine 262 each carry the N6-acetyllysine modification.

Belongs to the prohibitin family. In terms of assembly, the mitochondrial prohibitin complex consists of two subunits (PHB1 and PHB2), assembled into a membrane-associated ring-shaped supercomplex of approximately 1 mDa. Interacts with ESR1, HDAC1 and HDAC5. Interacts with ZNF703. Interacts with STOML2. Interacts with ARFGEF3. Interacts with SPHK2. Interacts with COX4I1; the interaction associates PHB2 with COX. Interacts with MAP1LC3B (membrane-bound form LC3-II); the interaction is direct and upon mitochondrial depolarization and proteasome-dependent outer membrane rupture. Interacts with IGFBP6 (via C-terminal domain). Interacts with CLPB. Interacts with CD86 (via cytoplasmic domain); the interactions increases after priming with CD40. Interacts with AFG3L2. Interacts with DNAJC19. Interacts with AKT2; this interaction may be important for myogenic differentiation. Phosphorylated. Tyrosine phosphorylation is indirectly stimulated by IGFBP6.

It localises to the mitochondrion inner membrane. It is found in the cytoplasm. The protein resides in the nucleus. Its subcellular location is the cell membrane. Functionally, protein with pleiotropic attributes mediated in a cell-compartment- and tissue-specific manner, which include the plasma membrane-associated cell signaling functions, mitochondrial chaperone, and transcriptional co-regulator of transcription factors and sex steroid hormones in the nucleus. In the mitochondria, together with PHB, forms large ring complexes (prohibitin complexes) in the inner mitochondrial membrane (IMM) and functions as a chaperone protein that stabilizes mitochondrial respiratory enzymes and maintains mitochondrial integrity in the IMM, which is required for mitochondrial morphogenesis, neuronal survival, and normal lifespan. The prohibitin complex, with DNAJC19, regulates cardiolipin remodeling and the protein turnover of OMA1 in a cardiolipin-binding manner. Also regulates cytochrome-c oxidase assembly (COX) and mitochondrial respiration. Binding to sphingoid 1-phosphate (SPP) modulates its regulator activity. Has a key role of mitophagy receptor involved in targeting mitochondria for autophagic degradation. Involved in mitochondrial-mediated antiviral innate immunity, activates RIG-I-mediated signal transduction and production of IFNB1 and pro-inflammatory cytokine IL6. In terms of biological role, in the nucleus, serves as transcriptional co-regulator. Acts as a mediator of transcriptional repression by nuclear hormone receptors via recruitment of histone deacetylases. Functions as an estrogen receptor (ER)-selective coregulator that potentiates the inhibitory activities of antiestrogens and represses the activity of estrogens. Competes with NCOA1 for modulation of ER transcriptional activity. Its function is as follows. In the plasma membrane, is involved in IGFBP6-induced cell migration. Cooperates with CD86 to mediate CD86-signaling in B lymphocytes that regulates the level of IgG1 produced through the activation of distal signaling intermediates. Upon CD40 engagement, required to activate NF-kappa-B signaling pathway via phospholipase C and protein kinase C activation. The chain is Prohibitin-2 (PHB2) from Pongo abelii (Sumatran orangutan).